Here is a 525-residue protein sequence, read N- to C-terminus: Bestrophin homolog 15 (525 aa).

Helical transmembrane passes span 36-56 (LFMF…NLII), 71-91 (FDQN…VTII), 237-257 (LAYP…ALIA), and 273-293 (ILYP…VVGW).

Belongs to the anion channel-forming bestrophin (TC 1.A.46) family. Calcium-sensitive chloride channel subfamily. Forms oligomers.

It is found in the cell membrane. Functionally, forms chloride channels. This is Bestrophin homolog 15 (best-15) from Caenorhabditis elegans.